A 192-amino-acid polypeptide reads, in one-letter code: RNA pyrophosphohydrolase (192 aa).

The Nudix hydrolase domain maps to 6 to 149 (GYRPNVGIVI…KKDVYRKVMK (144 aa)). The short motif at 38-59 (GGINDNETAEQAMYRELYEEAG) is the Nudix box element.

It belongs to the Nudix hydrolase family. RppH subfamily. A divalent metal cation serves as cofactor.

Its function is as follows. Accelerates the degradation of transcripts by removing pyrophosphate from the 5'-end of triphosphorylated RNA, leading to a more labile monophosphorylated state that can stimulate subsequent ribonuclease cleavage. The protein is RNA pyrophosphohydrolase of Histophilus somni (strain 129Pt) (Haemophilus somnus).